We begin with the raw amino-acid sequence, 286 residues long: Putative S-adenosyl-L-methionine-dependent methyltransferase FRAAL3718 (286 aa).

S-adenosyl-L-methionine is bound by residues Asp122 and 151–152 (DL).

This sequence belongs to the UPF0677 family.

Functionally, exhibits S-adenosyl-L-methionine-dependent methyltransferase activity. The chain is Putative S-adenosyl-L-methionine-dependent methyltransferase FRAAL3718 from Frankia alni (strain DSM 45986 / CECT 9034 / ACN14a).